Consider the following 270-residue polypeptide: UBX domain-containing protein 8 (270 aa).

A topological domain (cytoplasmic) is located at residue Met1. Residues 2-22 (ASRGVVGIFFLSAVPLVCLEL) traverse the membrane as a helical segment. At 23–33 (RRGIPDIGIKD) the chain is on the lumenal side. The helical transmembrane segment at 34 to 54 (FLLLCGRILLLLALLTLIISV) threads the bilayer. Residues 55–270 (TTSWLNSFKS…LILEEKEQTN (216 aa)) are Cytoplasmic-facing. Positions 130 to 171 (SGHKLGGDEGTSQTSFETSNREAAKSQNLPKPLTEFPSPAEQ) are disordered. The residue at position 167 (Ser167) is a Phosphoserine. In terms of domain architecture, UBX spans 187 to 263 (TAEEVVTVAL…GITVDTVLIL (77 aa)).

As to quaternary structure, interacts with SYVN1 and VCP. As to expression, expressed abundantly in ovary and testis, and weakly in all other tissues tested.

The protein resides in the endoplasmic reticulum membrane. In terms of biological role, involved in endoplasmic reticulum-associated degradation (ERAD) for misfolded lumenal proteins, possibly by tethering VCP to the endoplasmic reticulum membrane. May play a role in reproduction. In Homo sapiens (Human), this protein is UBX domain-containing protein 8 (UBXN8).